The chain runs to 304 residues: Protein Largen (304 aa).

Residues 1–22 (MSAKSKGNPSSSSAAEGPPAAS) are compositionally biased toward low complexity. Disordered regions lie at residues 1–27 (MSAKSKGNPSSSSAAEGPPAASKTKVK), 66–109 (QLED…PPAH), 114–133 (LTVLRKPNPPPPPPRLTPVR), and 236–304 (EPVH…TTTV). Positions 33–70 (IVEDLELVLGDLKDVAKELKEVVDQIDTLTSDLQLEDE) form a coiled coil. Residues 77 to 91 (TDTLNSSSSGTTASS) are compositionally biased toward low complexity. Composition is skewed to pro residues over residues 120–129 (PNPPPPPPRL) and 275–289 (FPPPTPATVPPPAAP).

Regulator of cell size that promotes cell size increase independently of mTOR and Hippo signaling pathways. Acts by stimulating the translation of specific mRNAs, including those encoding proteins affecting mitochondrial functions. Increases mitochondrial mass and respiration. This Mus musculus (Mouse) protein is Protein Largen (Prr16).